Here is a 247-residue protein sequence, read N- to C-terminus: Small ribosomal subunit protein uS3 (247 aa).

Residues 39–107 form the KH type-2 domain; the sequence is VRDYLRKKLD…PAQVNIEEIT (69 aa). The interval 213–247 is disordered; the sequence is SVYNPPKEDKTRAPKRRGRSNSNRRNSDRANTDRG. A compositionally biased stretch (basic and acidic residues) spans 237–247; sequence RNSDRANTDRG.

The protein belongs to the universal ribosomal protein uS3 family. Part of the 30S ribosomal subunit. Forms a tight complex with proteins S10 and S14.

Functionally, binds the lower part of the 30S subunit head. Binds mRNA in the 70S ribosome, positioning it for translation. The protein is Small ribosomal subunit protein uS3 of Psychrobacter sp. (strain PRwf-1).